We begin with the raw amino-acid sequence, 184 residues long: ATP synthase subunit b, chloroplastic (184 aa).

A helical membrane pass occupies residues Leu27–Leu49.

It belongs to the ATPase B chain family. In terms of assembly, F-type ATPases have 2 components, F(1) - the catalytic core - and F(0) - the membrane proton channel. F(1) has five subunits: alpha(3), beta(3), gamma(1), delta(1), epsilon(1). F(0) has four main subunits: a(1), b(1), b'(1) and c(10-14). The alpha and beta chains form an alternating ring which encloses part of the gamma chain. F(1) is attached to F(0) by a central stalk formed by the gamma and epsilon chains, while a peripheral stalk is formed by the delta, b and b' chains.

The protein resides in the plastid. The protein localises to the chloroplast thylakoid membrane. In terms of biological role, f(1)F(0) ATP synthase produces ATP from ADP in the presence of a proton or sodium gradient. F-type ATPases consist of two structural domains, F(1) containing the extramembraneous catalytic core and F(0) containing the membrane proton channel, linked together by a central stalk and a peripheral stalk. During catalysis, ATP synthesis in the catalytic domain of F(1) is coupled via a rotary mechanism of the central stalk subunits to proton translocation. Its function is as follows. Component of the F(0) channel, it forms part of the peripheral stalk, linking F(1) to F(0). In Olimarabidopsis pumila (Dwarf rocket), this protein is ATP synthase subunit b, chloroplastic.